The chain runs to 220 residues: Thiamine-phosphate synthase (220 aa).

4-amino-2-methyl-5-(diphosphooxymethyl)pyrimidine is bound by residues 46 to 50 and Asn-83; that span reads QFREK. Positions 84 and 103 each coordinate Mg(2+). Ser-122 is a 4-amino-2-methyl-5-(diphosphooxymethyl)pyrimidine binding site. 149–151 is a binding site for 2-[(2R,5Z)-2-carboxy-4-methylthiazol-5(2H)-ylidene]ethyl phosphate; sequence TNS. 4-amino-2-methyl-5-(diphosphooxymethyl)pyrimidine is bound at residue Lys-152. 2-[(2R,5Z)-2-carboxy-4-methylthiazol-5(2H)-ylidene]ethyl phosphate-binding positions include Gly-181 and 201-202; that span reads IS.

This sequence belongs to the thiamine-phosphate synthase family. Requires Mg(2+) as cofactor.

The enzyme catalyses 2-[(2R,5Z)-2-carboxy-4-methylthiazol-5(2H)-ylidene]ethyl phosphate + 4-amino-2-methyl-5-(diphosphooxymethyl)pyrimidine + 2 H(+) = thiamine phosphate + CO2 + diphosphate. It catalyses the reaction 2-(2-carboxy-4-methylthiazol-5-yl)ethyl phosphate + 4-amino-2-methyl-5-(diphosphooxymethyl)pyrimidine + 2 H(+) = thiamine phosphate + CO2 + diphosphate. The catalysed reaction is 4-methyl-5-(2-phosphooxyethyl)-thiazole + 4-amino-2-methyl-5-(diphosphooxymethyl)pyrimidine + H(+) = thiamine phosphate + diphosphate. It functions in the pathway cofactor biosynthesis; thiamine diphosphate biosynthesis; thiamine phosphate from 4-amino-2-methyl-5-diphosphomethylpyrimidine and 4-methyl-5-(2-phosphoethyl)-thiazole: step 1/1. Its function is as follows. Condenses 4-methyl-5-(beta-hydroxyethyl)thiazole monophosphate (THZ-P) and 2-methyl-4-amino-5-hydroxymethyl pyrimidine pyrophosphate (HMP-PP) to form thiamine monophosphate (TMP). The chain is Thiamine-phosphate synthase from Mannheimia succiniciproducens (strain KCTC 0769BP / MBEL55E).